The following is an 88-amino-acid chain: Small ribosomal subunit protein uS15 (88 aa).

Belongs to the universal ribosomal protein uS15 family. As to quaternary structure, part of the 30S ribosomal subunit. Forms a bridge to the 50S subunit in the 70S ribosome, contacting the 23S rRNA.

In terms of biological role, one of the primary rRNA binding proteins, it binds directly to 16S rRNA where it helps nucleate assembly of the platform of the 30S subunit by binding and bridging several RNA helices of the 16S rRNA. Functionally, forms an intersubunit bridge (bridge B4) with the 23S rRNA of the 50S subunit in the ribosome. The protein is Small ribosomal subunit protein uS15 of Mesomycoplasma flocculare (Mycoplasma flocculare).